Reading from the N-terminus, the 263-residue chain is 22 kDa alpha-zein 16 (263 aa).

The N-terminal stretch at 1–21 is a signal peptide; sequence MATKILALLALLALLVSATNA.

It belongs to the zein family. As to expression, expressed in developing endosperm.

Functionally, zeins are major seed storage proteins. The polypeptide is 22 kDa alpha-zein 16 (Zea mays (Maize)).